The sequence spans 489 residues: Rhamnulokinase (489 aa).

13-17 contributes to the ATP binding site; that stretch reads ASSGR. Residues C68 and C222 are joined by a disulfide bond. Substrate-binding positions include G83 and 236-238; that span reads HDT. D237 (proton acceptor) is an active-site residue. T259 provides a ligand contact to ATP. N296 serves as a coordination point for substrate. ATP is bound at residue Q304. C353 and C370 are disulfide-bonded. G402 is a binding site for ATP. C413 and C417 form a disulfide bridge.

This sequence belongs to the rhamnulokinase family. Requires Mg(2+) as cofactor.

It catalyses the reaction L-rhamnulose + ATP = L-rhamnulose 1-phosphate + ADP + H(+). It participates in carbohydrate degradation; L-rhamnose degradation; glycerone phosphate from L-rhamnose: step 2/3. Functionally, involved in the catabolism of L-rhamnose (6-deoxy-L-mannose). Catalyzes the transfer of the gamma-phosphate group from ATP to the 1-hydroxyl group of L-rhamnulose to yield L-rhamnulose 1-phosphate. This Salmonella paratyphi A (strain AKU_12601) protein is Rhamnulokinase.